We begin with the raw amino-acid sequence, 50 residues long: Protein HokA (50 aa).

The chain crosses the membrane as a helical span at residues 7–24 (LLSLIVICFTLLFFTWMI).

It belongs to the Hok/Gef family.

The protein resides in the cell inner membrane. In terms of biological role, toxic component of a type I toxin-antitoxin (TA) system. When overexpressed kills cells within minutes; causes collapse of the transmembrane potential and arrest of respiration. Its toxic effect is probably neutralized by antisense antitoxin RNA SokA. This Escherichia coli (strain K12) protein is Protein HokA.